The following is a 112-amino-acid chain: Colipase (112 aa).

The N-terminal stretch at 1 to 17 (MEKILVLLLVALAVVYA) is a signal peptide. Residues 18-22 (VPDPR) constitute a propeptide, enterostatin, activation peptide. Intrachain disulfides connect Cys34-Cys45, Cys40-Cys56, Cys44-Cys78, Cys66-Cys86, and Cys80-Cys104.

The protein belongs to the colipase family. In terms of assembly, forms a 1:1 stoichiometric complex with pancreatic lipase. Expressed by the pancreas.

The protein resides in the secreted. In terms of biological role, colipase is a cofactor of pancreatic lipase. It allows the lipase to anchor itself to the lipid-water interface. Without colipase the enzyme is washed off by bile salts, which have an inhibitory effect on the lipase. Its function is as follows. Enterostatin has a biological activity as a satiety signal. This is Colipase (CLPS) from Canis lupus familiaris (Dog).